The sequence spans 93 residues: Small ribosomal subunit protein uS19 (93 aa).

This sequence belongs to the universal ribosomal protein uS19 family.

In terms of biological role, protein S19 forms a complex with S13 that binds strongly to the 16S ribosomal RNA. This is Small ribosomal subunit protein uS19 from Ehrlichia chaffeensis (strain ATCC CRL-10679 / Arkansas).